Consider the following 162-residue polypeptide: Endoribonuclease YbeY (162 aa).

Residues H117, H121, and H127 each contribute to the Zn(2+) site.

The protein belongs to the endoribonuclease YbeY family. Zn(2+) is required as a cofactor.

Its subcellular location is the cytoplasm. Single strand-specific metallo-endoribonuclease involved in late-stage 70S ribosome quality control and in maturation of the 3' terminus of the 16S rRNA. The sequence is that of Endoribonuclease YbeY from Francisella tularensis subsp. holarctica (strain OSU18).